Consider the following 209-residue polypeptide: Lysine-rich arabinogalactan protein 18 (209 aa).

An N-terminal signal peptide occupies residues 1–21 (MDRNFLLTVTLICIVVAGVGG). The tract at residues 21–185 (GQSPISSPTK…PSADDQSGAA (165 aa)) is disordered. Residues 23-79 (SPISSPTKSPTTPSAPTTSPTKSPAVTSPTTAPAKTPTASASSPVESPKSPAPVSES) are compositionally biased toward low complexity. 2 stretches are compositionally biased toward pro residues: residues 80-95 (SPPP…PVPA) and 103-119 (SSPP…PAPV). Residues 132 to 145 (SKHKKTTKKSKKHQ) show a composition bias toward basic residues. Over residues 149–164 (APAPELLGPPAPPTES) the composition is skewed to pro residues. G183 is lipidated: GPI-anchor amidated glycine. Positions 184–209 (AASTRVLRNVAVGAVATAWAVLVMAF) are cleaved as a propeptide — removed in mature form.

It belongs to the lysine-rich AGP family. O-glycosylated on the hydroxyproline residues. As to expression, predominantly expressed in flowers, and moderately expressed in roots, stems and young leaves.

The protein localises to the cell membrane. In terms of biological role, proteoglycan that seems to be implicated in diverse developmental roles such as differentiation, cell-cell recognition, embryogenesis and programmed cell death. In Arabidopsis thaliana (Mouse-ear cress), this protein is Lysine-rich arabinogalactan protein 18 (AGP18).